The chain runs to 326 residues: Polycomb complex protein BMI-1 (326 aa).

The RING-type zinc-finger motif lies at 18–57 (CVLCGGYFIDATTIIECLHSFCKTCIVRYLETSKYCPICD). Residues 81–95 (KLVPGLFKNEMKRRR) carry the Nuclear localization signal motif. An interaction with PHC2 region spans residues 162–182 (RYLRCPAAMTVMHLRKFLRSK). The segment at 164 to 228 (LRCPAAMTVM…GPLPLKYRVR (65 aa)) is interaction with E4F1. Positions 236–326 (ISHQRDGLTN…VNGSSATSSG (91 aa)) are disordered. Over residues 266-278 (PSTSSCLPSPSTP) the composition is skewed to low complexity. A compositionally biased stretch (polar residues) spans 279–309 (VQSPHPQFPHISSTMNGTSNSPSGNHQSSFA). A compositionally biased stretch (low complexity) spans 315-326 (SSVNGSSATSSG).

Component of a PRC1-like complex. Identified in a PRC1-like HPRC-H complex with CBX2, CBX4, CBX8, PHC1, PHC2, PHC3 RING1 and RNF2. Interacts with RNF2/RING2. Interacts with RING1. Part of a complex that contains RNF2, UB2D3 and BMI1, where RNF2 and BMI1 form a tight heterodimer, and UB2D3 interacts only with RNF2. The complex composed of RNF2, UB2D3 and BMI1 binds nucleosomes, and has activity only with nucleosomal histone H2A. Interacts with CBX7 and CBX8. Interacts with SPOP. Part of a complex consisting of BMI1, CUL3 and SPOP. Interacts with E4F1. Interacts with PHC2. Interacts with zinc finger protein ZNF277. May be part of a complex including at least ZNF277, BMI1 and RNF2/RING2. In terms of processing, monoubiquitinated. May be polyubiquitinated; which does not lead to proteasomal degradation.

Its subcellular location is the nucleus. The protein resides in the cytoplasm. Component of a Polycomb group (PcG) multiprotein PRC1-like complex, a complex class required to maintain the transcriptionally repressive state of many genes, including Hox genes, throughout development. PcG PRC1 complex acts via chromatin remodeling and modification of histones; it mediates monoubiquitination of histone H2A 'Lys-119', rendering chromatin heritably changed in its expressibility. The complex composed of RNF2, UB2D3 and BMI1 binds nucleosomes, and has activity only with nucleosomal histone H2A. In the PRC1-like complex, regulates the E3 ubiquitin-protein ligase activity of RNF2/RING2. In Homo sapiens (Human), this protein is Polycomb complex protein BMI-1 (BMI1).